Here is a 206-residue protein sequence, read N- to C-terminus: 2,3-bisphosphoglycerate-dependent phosphoglycerate mutase (206 aa).

Substrate is bound by residues 9-16 (RHGQSEWN), 22-23 (TG), R61, 88-91 (ERDY), K99, 115-116 (RR), and 159-160 (GN). Catalysis depends on H10, which acts as the Tele-phosphohistidine intermediate. The active-site Proton donor/acceptor is E88.

This sequence belongs to the phosphoglycerate mutase family. BPG-dependent PGAM subfamily. In terms of assembly, homodimer.

The enzyme catalyses (2R)-2-phosphoglycerate = (2R)-3-phosphoglycerate. Its pathway is carbohydrate degradation; glycolysis; pyruvate from D-glyceraldehyde 3-phosphate: step 3/5. Catalyzes the interconversion of 2-phosphoglycerate and 3-phosphoglycerate. The chain is 2,3-bisphosphoglycerate-dependent phosphoglycerate mutase from Brucella anthropi (strain ATCC 49188 / DSM 6882 / CCUG 24695 / JCM 21032 / LMG 3331 / NBRC 15819 / NCTC 12168 / Alc 37) (Ochrobactrum anthropi).